Consider the following 308-residue polypeptide: MVPMASNNLAYIKLRLLSLLVGLGIAALASLIIYAVAYYLFGIYSIGIIFGVFVLVLMMDLLQWFIGPYIVDMVYRAKKADPNRYGNIIAIVEEVAKLNGIRPPTLYISEVSFPNAFAYESPIAGRRIAITRPLLGILNEDELRAVIGHEIGHLKHHDSAVIMAIGLIPTLIFYFAYTTLFAGDRRNGGSAIILALVLMVVSFLFNIMVLSVNRLRESYADANAALTIPNGARNLQTALAKIVRYGSSAKNTAASMLLFANYDMDREDVETLIDKWRTMRVGILSDLFSDHPHPAKRIRLLDKLQDSS.

A run of 2 helical transmembrane segments spans residues 16 to 36 (LLSLLVGLGIAALASLIIYAV) and 39 to 59 (YLFGIYSIGIIFGVFVLVLMM). His-149 contributes to the Zn(2+) binding site. The active site involves Glu-150. His-153 lines the Zn(2+) pocket. 2 helical membrane passes run 161–181 (VIMAIGLIPTLIFYFAYTTLF) and 192–212 (IILALVLMVVSFLFNIMVLSV). Residue Glu-217 participates in Zn(2+) binding.

The protein belongs to the peptidase M48B family. The cofactor is Zn(2+).

It is found in the cell membrane. The protein is Protease HtpX homolog of Thermoplasma volcanium (strain ATCC 51530 / DSM 4299 / JCM 9571 / NBRC 15438 / GSS1).